The sequence spans 1029 residues: DNA repair protein RAD5A (1029 aa).

Residues Ser83–Ser104 are disordered. A Helicase ATP-binding domain is found at Pro406 to Glu622. Asp419 to Thr426 serves as a coordination point for ATP. A DEAH box motif is present at residues Asp573–His576. The RING-type zinc finger occupies Cys794 to Arg834. The Helicase C-terminal domain maps to Lys864–Thr1029.

It belongs to the SNF2/RAD54 helicase family. RAD16 subfamily.

The protein resides in the nucleus. Its function is as follows. Functions in error-free postreplication DNA repair or DNA-damage tolerance (DTT) pathway. Required for homologous recombination (HR) induced by DNA double-strand break (DSB) in somatic cells. Required for damage-induced DNA repair, independently of MUS81 and RECQL4A. Plays a role in synthesis-dependent strand annealing (SDSA) but not in single-strand annealing (SSA). Possesses double-stranded DNA-dependent ATPase activity. Is able to regress replication forks with preference for forks with a leading strand gap. Is able to catalyze branch migration of Holliday junctions and is unaffected by protein blockades. The sequence is that of DNA repair protein RAD5A from Arabidopsis thaliana (Mouse-ear cress).